The primary structure comprises 113 residues: Iron-sulfur cluster insertion protein ErpA (113 aa).

Positions 41, 105, and 107 each coordinate iron-sulfur cluster.

It belongs to the HesB/IscA family. In terms of assembly, homodimer. The cofactor is iron-sulfur cluster.

Functionally, required for insertion of 4Fe-4S clusters for at least IspG. The chain is Iron-sulfur cluster insertion protein ErpA from Hydrogenovibrio crunogenus (strain DSM 25203 / XCL-2) (Thiomicrospira crunogena).